A 539-amino-acid chain; its full sequence is Probable quinate permease (539 aa).

The Cytoplasmic segment spans residues 1–22; that stretch reads MSILSMVEDRPTPKEVYNWRIY. A helical membrane pass occupies residues 23–43; sequence LLAAVASFTSCMIGYDSAFIG. Residues 44-74 lie on the Extracellular side of the membrane; that stretch reads TTISLDSFKNEFHWDSMSTAKQNLVSANIVS. A helical membrane pass occupies residues 75-95; it reads CYQAGAFFGAFFAYPIGHFWG. Topologically, residues 96 to 97 are cytoplasmic; that stretch reads RK. The helical transmembrane segment at 98–118 threads the bilayer; it reads WGLMLSALVFTLGAGLMLGAN. The Extracellular segment spans residues 119-130; the sequence is GDRGLGLIYGGR. Residues 131-151 traverse the membrane as a helical segment; the sequence is VLAGLGVGAGSNFTPIYISEL. Over 152–159 the chain is Cytoplasmic; that stretch reads APPAIRGR. A helical membrane pass occupies residues 160–180; sequence LVGVYELGWQVGGLVGFWINY. Topologically, residues 181–193 are extracellular; that stretch reads GVEQTMAPSHKQW. A helical membrane pass occupies residues 194-214; it reads LIPFAVQLIPAGLLIIGILFV. The Cytoplasmic segment spans residues 215-285; the sequence is KESPRWLFLR…AWTNKRILYR (71 aa). Residues 286-306 form a helical membrane-spanning segment; that stretch reads LFLGSMLFFWQNGSGINAINY. Residues 307-325 lie on the Extracellular side of the membrane; that stretch reads YSPTVFKSIGLKGNSSSLL. Residues 326 to 346 traverse the membrane as a helical segment; it reads TTGIFGVVKTVVTIVWLLYLI. Residues 347–352 lie on the Cytoplasmic side of the membrane; sequence DHVGRR. Residues 353–373 traverse the membrane as a helical segment; the sequence is LLLLIGAAGGSICMWIVGAYI. The Extracellular segment spans residues 374–387; it reads KVVDPTHNQSDHLN. The helical transmembrane segment at 388-408 threads the bilayer; sequence GGGVAAIFFFYLWTAFYTPSW. The Cytoplasmic portion of the chain corresponds to 409-456; the sequence is NGTPWVINSEMFDPNIRSLAQACAAGSNWLWNFLISRFTPQMFAKMDY. Residues 457-477 traverse the membrane as a helical segment; sequence GVYFFFASLMLLSIPFVFFLV. The Extracellular portion of the chain corresponds to 478–539; sequence PETKGIPLEN…EQVEDTDRKE (62 aa).

This sequence belongs to the major facilitator superfamily. Sugar transporter (TC 2.A.1.1) family. Interacts with creB. Post-translationally, ubiquitinated. Deubiquitinated by creB, probably to control its activity or amount.

It localises to the cell membrane. Functionally, integral membrane transporter that imports quinic acid to be catabolized as a carbon source. The protein is Probable quinate permease (qutD) of Aspergillus niger (strain ATCC MYA-4892 / CBS 513.88 / FGSC A1513).